Reading from the N-terminus, the 144-residue chain is DNA-directed RNA polymerases II and V subunit 6B (144 aa).

Residues 1–32 show a composition bias toward acidic residues; that stretch reads MADDDYNEVDDLGYEDEPAEPEIEEGVEEDAD. A disordered region spans residues 1-62; it reads MADDDYNEVD…EPVQRPRKTS (62 aa). A compositionally biased stretch (basic and acidic residues) spans 46–56; the sequence is TEDKVETEPVQ.

This sequence belongs to the archaeal Rpo6/eukaryotic RPB6 RNA polymerase subunit family. In terms of assembly, component of the RNA polymerase II and V complexes.

The protein localises to the nucleus. Functionally, DNA-dependent RNA polymerase catalyzes the transcription of DNA into RNA using the four ribonucleoside triphosphates as substrates. Component of RNA polymerase II which synthesizes mRNA precursors and many functional non-coding RNAs. Pol II is the central component of the basal RNA polymerase II transcription machinery. It is composed of mobile elements that move relative to each other. Component of RNA polymerase V which mediates RNA-directed DNA methylation-dependent (RdDM) transcriptional gene silencing (TGS) of endogenous repeated sequences, including transposable elements. This Arabidopsis thaliana (Mouse-ear cress) protein is DNA-directed RNA polymerases II and V subunit 6B (NRPB6B).